Reading from the N-terminus, the 236-residue chain is MAIIGILGTPYNTVEQSPFWWNKVSYTRQSFIDVFQDLGHTVIILPVDKTENIKNYLTLVDKIVLTGGADVSPYLYGEEPNAKLGTTDPIRDRFELATIKAALEANKPILGVCRGLQLLNVYFGGRLYQDLSQTSSQIKHLQSPTPQEIPTHHISVEQESALGFLPENYMVNSFHHQVIKDLGQGLTAIAHGNDGLVEAIENKEKHVLAVQWHPECTWETEHFDKKIFEIFANGTI.

Residues 17–236 (SPFWWNKVSY…IFEIFANGTI (220 aa)) form the Glutamine amidotransferase type-1 domain.

This Lactococcus lactis subsp. lactis (strain IL1403) (Streptococcus lactis) protein is Putative glutamine amidotransferase-like protein YvdE (yvdE).